The following is a 61-amino-acid chain: UPF0391 membrane protein Bpro_0066 (61 aa).

The next 2 membrane-spanning stretches (helical) occupy residues 5 to 25 (AIIF…GVAA) and 33 to 53 (ILFG…ALGV).

The protein belongs to the UPF0391 family.

The protein localises to the cell membrane. The sequence is that of UPF0391 membrane protein Bpro_0066 from Polaromonas sp. (strain JS666 / ATCC BAA-500).